Consider the following 283-residue polypeptide: Small ribosomal subunit protein uS2 (283 aa).

Residues 229-283 (RSAGKSGEQPAEAEPMPDWERELLEGDGAKTEAKAEEPKAEAKKADEAPEAEKSN) are disordered. Basic and acidic residues predominate over residues 246 to 283 (DWERELLEGDGAKTEAKAEEPKAEAKKADEAPEAEKSN).

Belongs to the universal ribosomal protein uS2 family.

The sequence is that of Small ribosomal subunit protein uS2 from Cutibacterium acnes (strain DSM 16379 / KPA171202) (Propionibacterium acnes).